Consider the following 328-residue polypeptide: Malate dehydrogenase (328 aa).

12-18 (GAAGQIA) provides a ligand contact to NAD(+). 2 residues coordinate substrate: arginine 93 and arginine 99. NAD(+)-binding positions include asparagine 106, glutamine 113, and 130 to 132 (VGN). Substrate is bound by residues asparagine 132 and arginine 163. The active-site Proton acceptor is the histidine 188.

This sequence belongs to the LDH/MDH superfamily. MDH type 2 family.

The enzyme catalyses (S)-malate + NAD(+) = oxaloacetate + NADH + H(+). Its function is as follows. Catalyzes the reversible oxidation of malate to oxaloacetate. The polypeptide is Malate dehydrogenase (Burkholderia lata (strain ATCC 17760 / DSM 23089 / LMG 22485 / NCIMB 9086 / R18194 / 383)).